Consider the following 585-residue polypeptide: Lipoprotein LpqB (585 aa).

The N-terminal stretch at 1-18 (MKRLLTVLVVGLVALVSG) is a signal peptide. Residue cysteine 19 is the site of N-palmitoyl cysteine attachment. The S-diacylglycerol cysteine moiety is linked to residue cysteine 19. The tract at residues 24 to 46 (SSSSPQAIGTVERPAPPSLPKPT) is disordered. Over residues 37–46 (PAPPSLPKPT) the composition is skewed to pro residues.

Belongs to the LpqB lipoprotein family. As to quaternary structure, interacts with MtrB, probably extracytoplasmically via its sensor domain.

Its subcellular location is the cell membrane. It localises to the secreted. The protein localises to the cell wall. May modulate activity of the MtrAB system in controlling homeostasis of the cell wall and cell division. This is Lipoprotein LpqB from Mycolicibacterium smegmatis (strain ATCC 700084 / mc(2)155) (Mycobacterium smegmatis).